Here is an 88-residue protein sequence, read N- to C-terminus: Exodeoxyribonuclease 7 small subunit (88 aa).

It belongs to the XseB family. In terms of assembly, heterooligomer composed of large and small subunits.

Its subcellular location is the cytoplasm. The enzyme catalyses Exonucleolytic cleavage in either 5'- to 3'- or 3'- to 5'-direction to yield nucleoside 5'-phosphates.. Bidirectionally degrades single-stranded DNA into large acid-insoluble oligonucleotides, which are then degraded further into small acid-soluble oligonucleotides. The protein is Exodeoxyribonuclease 7 small subunit of Bordetella bronchiseptica (strain ATCC BAA-588 / NCTC 13252 / RB50) (Alcaligenes bronchisepticus).